A 427-amino-acid polypeptide reads, in one-letter code: Glutamate-1-semialdehyde 2,1-aminomutase (427 aa).

Residue Lys265 is modified to N6-(pyridoxal phosphate)lysine.

This sequence belongs to the class-III pyridoxal-phosphate-dependent aminotransferase family. HemL subfamily. As to quaternary structure, homodimer. Pyridoxal 5'-phosphate is required as a cofactor.

It is found in the cytoplasm. The enzyme catalyses (S)-4-amino-5-oxopentanoate = 5-aminolevulinate. It participates in porphyrin-containing compound metabolism; protoporphyrin-IX biosynthesis; 5-aminolevulinate from L-glutamyl-tRNA(Glu): step 2/2. The sequence is that of Glutamate-1-semialdehyde 2,1-aminomutase from Pseudomonas putida (strain GB-1).